The sequence spans 1203 residues: DNA-directed RNA polymerase subunit beta' (1203 aa).

Zn(2+) contacts are provided by Cys-60, Cys-62, Cys-75, and Cys-78. Mg(2+) is bound by residues Asp-449, Asp-451, and Asp-453. Zn(2+)-binding residues include Cys-818, Cys-892, Cys-899, and Cys-902.

Belongs to the RNA polymerase beta' chain family. In terms of assembly, the RNAP catalytic core consists of 2 alpha, 1 beta, 1 beta' and 1 omega subunit. When a sigma factor is associated with the core the holoenzyme is formed, which can initiate transcription. It depends on Mg(2+) as a cofactor. Zn(2+) is required as a cofactor.

The enzyme catalyses RNA(n) + a ribonucleoside 5'-triphosphate = RNA(n+1) + diphosphate. Its function is as follows. DNA-dependent RNA polymerase catalyzes the transcription of DNA into RNA using the four ribonucleoside triphosphates as substrates. The sequence is that of DNA-directed RNA polymerase subunit beta' from Bacillus cereus (strain ATCC 14579 / DSM 31 / CCUG 7414 / JCM 2152 / NBRC 15305 / NCIMB 9373 / NCTC 2599 / NRRL B-3711).